Consider the following 262-residue polypeptide: Nodulation protein J (262 aa).

In terms of domain architecture, ABC transmembrane type-2 spans 33 to 259 (ASILGNLAEP…FLSVGLLQRR (227 aa)). 6 consecutive transmembrane segments (helical) span residues 35–55 (ILGN…GLGA), 62–82 (GIPY…MISA), 125–145 (ALLA…ASWP), 147–167 (VLFA…LAMI), 177–197 (YFIF…GAVF), and 236–256 (LHIS…VGLL).

Belongs to the ABC-2 integral membrane protein family. Lipooligosaccharide exporter (TC 3.A.1.102) subfamily. In terms of assembly, the complex is composed of two ATP-binding proteins (NodI) and two transmembrane proteins (NodJ).

Its subcellular location is the cell inner membrane. In terms of biological role, part of the ABC transporter complex NodIJ involved in the export of the nodulation factors (Nod factors), the bacterial signal molecules that induce symbiosis and subsequent nodulation induction. Nod factors are LCO (lipo-chitin oligosaccharide), a modified beta-1,4-linked N-acetylglucosamine oligosaccharide. This subunit encodes the transporter. This Sinorhizobium fredii (strain NBRC 101917 / NGR234) protein is Nodulation protein J (nodJ).